Consider the following 146-residue polypeptide: Snaclec coagulation factor IX/factor X-binding protein subunit B2 (146 aa).

The N-terminal stretch at 1-23 is a signal peptide; the sequence is MGRLIFVSFGLLVVFLSLSGTAA. Intrachain disulfides connect Cys-25–Cys-36, Cys-53–Cys-142, and Cys-119–Cys-134. One can recognise a C-type lectin domain in the interval 32 to 143; it reads YEGHCYKPFN…CRMMANFVCE (112 aa).

The protein belongs to the snaclec family. In terms of assembly, heterodimer of subunits A and B2; disulfide-linked. In terms of tissue distribution, expressed by the venom gland.

The protein resides in the secreted. Its function is as follows. Anticoagulant protein which binds to the gamma-carboxyglutamic acid-domain regions of factors IX (F9) and factor X (F10) in the presence of calcium with a 1 to 1 stoichiometry. This is Snaclec coagulation factor IX/factor X-binding protein subunit B2 from Trimeresurus stejnegeri (Chinese green tree viper).